Reading from the N-terminus, the 188-residue chain is Protein-L-isoaspartate O-methyltransferase (188 aa).

Ser33 is a catalytic residue.

It belongs to the methyltransferase superfamily. L-isoaspartyl/D-aspartyl protein methyltransferase family.

Its subcellular location is the cytoplasm. The catalysed reaction is [protein]-L-isoaspartate + S-adenosyl-L-methionine = [protein]-L-isoaspartate alpha-methyl ester + S-adenosyl-L-homocysteine. Functionally, catalyzes the methyl esterification of L-isoaspartyl residues in peptides and proteins that result from spontaneous decomposition of normal L-aspartyl and L-asparaginyl residues. It plays a role in the repair and/or degradation of damaged proteins. The sequence is that of Protein-L-isoaspartate O-methyltransferase from Methanocella arvoryzae (strain DSM 22066 / NBRC 105507 / MRE50).